Reading from the N-terminus, the 313-residue chain is MNSNIFPPSKQQNELNNIQQSFSNLQSQCSNLLLNVSQTLNPLFNANTNNNKPNIFSALNSFRDQAKQALDSRISRFNSGKAPVWARISDDGGGARAQVTVPIRGSGKGLSADAIEERLAGVPVYALSNSNEEFVLVSGTSSGKSLGLLFCKEEDAETLLKEMKSMDPRMRKEGSKVVALALSKVFQLKVNGVAFRLIPESTQVKNALKERKTAGIDDDDFHGVPVFQSKSLILRSENMSYRPVFFRKEDLEKSLIRASSQQNRLNPALKPGDIQVAVFEDIVKGMRESTTSNWDDIVFIPPGFEVSTEQTQE.

Residues 1-96 constitute a chloroplast transit peptide; that stretch reads MNSNIFPPSK…RISDDGGGAR (96 aa).

The protein belongs to the Tic22 family.

Its subcellular location is the plastid. The protein resides in the chloroplast intermembrane space. In terms of biological role, involved in protein precursor import into chloroplasts. The sequence is that of Protein TIC 22-like, chloroplastic (TIC22L) from Arabidopsis thaliana (Mouse-ear cress).